The sequence spans 512 residues: Alpha-amylase 1 (512 aa).

An N-terminal signal peptide occupies residues 1–25; the sequence is MRFSTEGFTSKVVAAILAFSRLVSA. C66 and C74 form a disulfide bridge. W119 lines the substrate pocket. Residue N157 participates in Ca(2+) binding. H158 contributes to the substrate binding site. A disulfide bridge links C186 with C200. Residues E198 and D211 each contribute to the Ca(2+) site. An N-linked (GlcNAc...) asparagine glycan is attached at N233. R240 contributes to the substrate binding site. D242, H246, and E266 together coordinate Ca(2+). Catalysis depends on D242, which acts as the Nucleophile. 245–246 is a binding site for substrate; the sequence is KH. E266 serves as the catalytic Proton donor. Residue G270 coordinates substrate. An intrachain disulfide couples C276 to C319. Substrate contacts are provided by D333 and R380. A disulfide bridge connects residues C475 and C510.

The protein belongs to the glycosyl hydrolase 13 family. Ca(2+) is required as a cofactor.

The protein resides in the secreted. It catalyses the reaction Endohydrolysis of (1-&gt;4)-alpha-D-glucosidic linkages in polysaccharides containing three or more (1-&gt;4)-alpha-linked D-glucose units.. Its activity is regulated as follows. Alpha-amylase expression underlies catabolite repression by glucose. The chain is Alpha-amylase 1 (AMY1) from Schwanniomyces occidentalis (Yeast).